Consider the following 259-residue polypeptide: UPF0758 protein Bphyt_3148 (259 aa).

In terms of domain architecture, MPN spans 137 to 259; it reads LLNSPEAVEN…VYSFARAGWP (123 aa). His-208, His-210, and Asp-221 together coordinate Zn(2+). The JAMM motif signature appears at 208-221; that stretch reads HNHPSGAVQPSASD.

The protein belongs to the UPF0758 family.

This Paraburkholderia phytofirmans (strain DSM 17436 / LMG 22146 / PsJN) (Burkholderia phytofirmans) protein is UPF0758 protein Bphyt_3148.